Consider the following 638-residue polypeptide: Growth hormone receptor (638 aa).

The N-terminal stretch at 1–18 (MDLWQLLLTLALAGSSDA) is a signal peptide. Topologically, residues 19-264 (FSGSEPTAAI…NQFTCEEDFY (246 aa)) are extracellular. N46 is a glycosylation site (N-linked (GlcNAc...) asparagine). 2 cysteine pairs are disulfide-bonded: C56–C66 and C101–C112. Residue N115 is glycosylated (N-linked (GlcNAc...) asparagine). C126 and C140 form a disulfide bridge. The 104-residue stretch at 151–254 (PPIALNWTLL…EVLYVTLPQM (104 aa)) folds into the Fibronectin type-III domain. N-linked (GlcNAc...) asparagine glycosylation is found at N156, N161, and N200. The WSXWS motif motif lies at 240–244 (YGEFS). A helical transmembrane segment spans residues 265-288 (FPWLLIIIFGIFGLTVMLFVFLFS). At 289 to 638 (KQQRIKMLIL…STDQLNKIMP (350 aa)) the chain is on the cytoplasmic side. The segment at 294-379 (KMLILPPVPV…HQKSHSNLGV (86 aa)) is required for JAK2 binding. Positions 297–305 (ILPPVPVPK) match the Box 1 motif motif. The short motif at 340-349 (DSWVEFIELD) is the UbE motif element. Position 341 is a phosphoserine (S341). The tract at residues 353-388 (PDEKNEGSDTDRLLSSDHQKSHSNLGVKDGDSGRTS) is disordered. Over residues 356 to 372 (KNEGSDTDRLLSSDHQK) the composition is skewed to basic and acidic residues. A phosphotyrosine mark is found at Y487 and Y595.

It belongs to the type I cytokine receptor family. Type 1 subfamily. On growth hormone (GH) binding, forms homodimers and binds JAK2 via a box 1-containing domain. Post-translationally, the soluble form (GHBP) is produced by phorbol ester-promoted proteolytic cleavage at the cell surface (shedding) by ADAM17/TACE. Shedding is inhibited by growth hormone (GH) binding to the receptor probably due to a conformational change in GHR rendering the receptor inaccessible to ADAM17. In terms of processing, on GH binding, phosphorylated on tyrosine residues in the cytoplasmic domain by JAK2. Ubiquitinated by the ECS(SOCS2) complex following ligand-binding and phosphorylation by JAK2, leading to its degradation by the proteasome. Regulation by the ECS(SOCS2) complex acts as a negative feedback loop of growth hormone receptor signaling. Ubiquitination is not sufficient for GHR internalization.

It localises to the cell membrane. It is found in the secreted. Functionally, receptor for pituitary gland growth hormone (GH1) involved in regulating postnatal body growth. On ligand binding, couples to the JAK2/STAT5 pathway. Its function is as follows. The soluble form (GHBP) acts as a reservoir of growth hormone in plasma and may be a modulator/inhibitor of GH signaling. The polypeptide is Growth hormone receptor (GHR) (Papio anubis (Olive baboon)).